Reading from the N-terminus, the 199-residue chain is uncharacterized protein (199 aa).

The signal sequence occupies residues 1-23 (MSARAPKELRLALPPCLLNRTFA). N19 and N26 each carry an N-linked (GlcNAc...) asparagine glycan. Residues 24 to 60 (SHNASGGSSAGLRSSGAGGGTCITQVGQQLFQSFSST) are Extracellular-facing. The helical transmembrane segment at 61 to 81 (LVLIVLVTLIFCLLVLSLSTF) threads the bilayer. At 82-199 (HIHKRRMKKR…EGLLQTVVLS (118 aa)) the chain is on the cytoplasmic side. A disordered region spans residues 93 to 190 (MQRAQEEYER…ASSCLDTPGE (98 aa)). Basic and acidic residues-rich tracts occupy residues 95–106 (RAQEEYERDHCS) and 124–135 (HGKETRLERQPR). Residues 147–163 (SSSSSSSSSPGLLCQGP) are compositionally biased toward low complexity. Pro residues predominate over residues 164 to 176 (CAPPPPLPAPTPQ).

It is found in the membrane. This is an uncharacterized protein from Mus musculus (Mouse).